Here is a 502-residue protein sequence, read N- to C-terminus: Glutamate--tRNA ligase (502 aa).

The 'HIGH' region motif lies at 12–22 (PSPTGYLHVGG). The short motif at 259–263 (KLSKR) is the 'KMSKS' region element. ATP is bound at residue Lys-262.

The protein belongs to the class-I aminoacyl-tRNA synthetase family. Glutamate--tRNA ligase type 1 subfamily. Monomer.

The protein localises to the cytoplasm. The catalysed reaction is tRNA(Glu) + L-glutamate + ATP = L-glutamyl-tRNA(Glu) + AMP + diphosphate. Functionally, catalyzes the attachment of glutamate to tRNA(Glu) in a two-step reaction: glutamate is first activated by ATP to form Glu-AMP and then transferred to the acceptor end of tRNA(Glu). This chain is Glutamate--tRNA ligase, found in Chlorobium chlorochromatii (strain CaD3).